The following is a 312-amino-acid chain: Pyridoxal kinase (312 aa).

At Met-1 the chain carries N-acetylmethionine. Pyridoxal is bound by residues Ser-12 and Thr-47. Thr-47 contributes to the pyridoxal 5'-phosphate binding site. Ser-59 is subject to Phosphoserine. Asp-113 is a binding site for ATP. Asp-113 contacts Na(+). Asp-118 provides a ligand contact to Mg(2+). Position 148 (Thr-148) interacts with Na(+). An ATP-binding site is contributed by 150–153; it reads NQFE. Ser-164 carries the post-translational modification Phosphoserine. Residue Thr-186 coordinates Na(+). Residue 186–187 coordinates ATP; sequence TS. The residue at position 213 (Ser-213) is a Phosphoserine. ATP contacts are provided by residues 226 to 228 and Thr-233; that span reads VDP. Pyridoxal 5'-phosphate is bound at residue 234–235; it reads GD. Asp-235 (proton acceptor) is an active-site residue. Ser-285 bears the Phosphoserine mark.

It belongs to the pyridoxine kinase family. Homodimer. It depends on Zn(2+) as a cofactor. Mg(2+) serves as cofactor.

The protein localises to the cytoplasm. It localises to the cytosol. The catalysed reaction is pyridoxal + ATP = pyridoxal 5'-phosphate + ADP + H(+). It carries out the reaction pyridoxamine + ATP = pyridoxamine 5'-phosphate + ADP + H(+). It catalyses the reaction pyridoxine + ATP = pyridoxine 5'-phosphate + ADP + H(+). It participates in cofactor metabolism; pyridoxal 5'-phosphate salvage; pyridoxal 5'-phosphate from pyridoxal: step 1/1. It functions in the pathway cofactor metabolism; pyridoxal 5'-phosphate salvage; pyridoxine 5'-phosphate from pyridoxine: step 1/1. The protein operates within cofactor metabolism; pyridoxal 5'-phosphate salvage; pyridoxamine 5'-phosphate from pyridoxamine: step 1/1. With respect to regulation, activity is increased in the presence of K(+)or Na(+). In terms of biological role, catalyzes the phosphorylation of the dietary vitamin B6 vitamers pyridoxal (PL), pyridoxine (PN) and pyridoxamine (PM) to form pyridoxal 5'-phosphate (PLP), pyridoxine 5'-phosphate (PNP) and pyridoxamine 5'-phosphate (PMP), respectively. PLP is the active form of vitamin B6, and acts as a cofactor for over 140 different enzymatic reactions. The polypeptide is Pyridoxal kinase (Pdxk) (Rattus norvegicus (Rat)).